The following is a 353-amino-acid chain: Holliday junction branch migration complex subunit RuvB (353 aa).

A large ATPase domain (RuvB-L) region spans residues 4–186 (ADRLIAATHS…FGIVQRLEFY (183 aa)). ATP is bound by residues isoleucine 25, arginine 26, glycine 67, lysine 70, threonine 71, threonine 72, 133–135 (EDF), arginine 176, tyrosine 186, and arginine 223. Threonine 71 lines the Mg(2+) pocket. The small ATPAse domain (RuvB-S) stretch occupies residues 187 to 257 (STADLATIVS…VADLALNLLD (71 aa)). A head domain (RuvB-H) region spans residues 260 to 353 (EHGFDHQDRR…VDEFLDAVDD (94 aa)). DNA contacts are provided by arginine 296, arginine 315, and arginine 320.

The protein belongs to the RuvB family. Homohexamer. Forms an RuvA(8)-RuvB(12)-Holliday junction (HJ) complex. HJ DNA is sandwiched between 2 RuvA tetramers; dsDNA enters through RuvA and exits via RuvB. An RuvB hexamer assembles on each DNA strand where it exits the tetramer. Each RuvB hexamer is contacted by two RuvA subunits (via domain III) on 2 adjacent RuvB subunits; this complex drives branch migration. In the full resolvosome a probable DNA-RuvA(4)-RuvB(12)-RuvC(2) complex forms which resolves the HJ.

Its subcellular location is the cytoplasm. It carries out the reaction ATP + H2O = ADP + phosphate + H(+). Its function is as follows. The RuvA-RuvB-RuvC complex processes Holliday junction (HJ) DNA during genetic recombination and DNA repair, while the RuvA-RuvB complex plays an important role in the rescue of blocked DNA replication forks via replication fork reversal (RFR). RuvA specifically binds to HJ cruciform DNA, conferring on it an open structure. The RuvB hexamer acts as an ATP-dependent pump, pulling dsDNA into and through the RuvAB complex. RuvB forms 2 homohexamers on either side of HJ DNA bound by 1 or 2 RuvA tetramers; 4 subunits per hexamer contact DNA at a time. Coordinated motions by a converter formed by DNA-disengaged RuvB subunits stimulates ATP hydrolysis and nucleotide exchange. Immobilization of the converter enables RuvB to convert the ATP-contained energy into a lever motion, pulling 2 nucleotides of DNA out of the RuvA tetramer per ATP hydrolyzed, thus driving DNA branch migration. The RuvB motors rotate together with the DNA substrate, which together with the progressing nucleotide cycle form the mechanistic basis for DNA recombination by continuous HJ branch migration. Branch migration allows RuvC to scan DNA until it finds its consensus sequence, where it cleaves and resolves cruciform DNA. This Pseudomonas fluorescens (strain Pf0-1) protein is Holliday junction branch migration complex subunit RuvB.